The following is a 242-amino-acid chain: Ribosomal RNA small subunit methyltransferase G (242 aa).

Residues Gly79, 130-131 (VE), and Gln149 each bind S-adenosyl-L-methionine.

This sequence belongs to the methyltransferase superfamily. RNA methyltransferase RsmG family.

It localises to the cytoplasm. Functionally, specifically methylates the N7 position of a guanine in 16S rRNA. The chain is Ribosomal RNA small subunit methyltransferase G from Mycoplasmoides gallisepticum (strain R(low / passage 15 / clone 2)) (Mycoplasma gallisepticum).